The chain runs to 798 residues: Penicillin-binding protein 1A (798 aa).

Topologically, residues 1–9 are cytoplasmic; that stretch reads MIKKIITTC. The helical; Signal-anchor for type II membrane protein transmembrane segment at 10–30 threads the bilayer; that stretch reads MGLNNGLALFGVGLIAIAILV. Over 31-798 the chain is Periplasmic; it reads TYPKLPSLDS…NNRQQLDSLF (768 aa). Residues 50 to 218 form a transglycosylase region; it reads LTIYSSDGQV…SAYNPIVNPE (169 aa). Catalysis depends on Glu-88, which acts as the Proton donor; for transglycosylase activity. The interval 413–699 is transpeptidase; it reads TVVQEPLLQG…GTIAVPVWVE (287 aa). Ser-460 acts as the Acyl-ester intermediate; for transpeptidase activity in catalysis. The segment at 734 to 798 is disordered; the sequence is TSSDLALDNS…NNRQQLDSLF (65 aa). Polar residues predominate over residues 782–798; it reads LPSNTGNNNRQQLDSLF.

This sequence in the N-terminal section; belongs to the glycosyltransferase 51 family. The protein in the C-terminal section; belongs to the transpeptidase family.

The protein resides in the cell inner membrane. The enzyme catalyses [GlcNAc-(1-&gt;4)-Mur2Ac(oyl-L-Ala-gamma-D-Glu-L-Lys-D-Ala-D-Ala)](n)-di-trans,octa-cis-undecaprenyl diphosphate + beta-D-GlcNAc-(1-&gt;4)-Mur2Ac(oyl-L-Ala-gamma-D-Glu-L-Lys-D-Ala-D-Ala)-di-trans,octa-cis-undecaprenyl diphosphate = [GlcNAc-(1-&gt;4)-Mur2Ac(oyl-L-Ala-gamma-D-Glu-L-Lys-D-Ala-D-Ala)](n+1)-di-trans,octa-cis-undecaprenyl diphosphate + di-trans,octa-cis-undecaprenyl diphosphate + H(+). It carries out the reaction Preferential cleavage: (Ac)2-L-Lys-D-Ala-|-D-Ala. Also transpeptidation of peptidyl-alanyl moieties that are N-acyl substituents of D-alanine.. The protein operates within cell wall biogenesis; peptidoglycan biosynthesis. Its function is as follows. Cell wall formation. Synthesis of cross-linked peptidoglycan from the lipid intermediates. The enzyme has a penicillin-insensitive transglycosylase N-terminal domain (formation of linear glycan strands) and a penicillin-sensitive transpeptidase C-terminal domain (cross-linking of the peptide subunits). This chain is Penicillin-binding protein 1A (mrcA), found in Neisseria flavescens.